Here is a 396-residue protein sequence, read N- to C-terminus: E3 ubiquitin-protein transferase MAEA (396 aa).

A LisH domain is found at Lys-121 to Asp-153. One can recognise a CTLH domain in the interval Met-159–Asp-216. Residues Cys-314–Thr-381 form an RING-Gid-type zinc finger.

In terms of assembly, identified in the CTLH complex that contains at least MAEA, RMND5A, GID8, WDR26, and RANBP9 and/or RANBP10 as the catalytic core. Interacts with F-actin.

The protein resides in the nucleus matrix. It localises to the cell membrane. Its subcellular location is the cytoplasm. The protein localises to the cytoskeleton. The enzyme catalyses S-ubiquitinyl-[E2 ubiquitin-conjugating enzyme]-L-cysteine + [acceptor protein]-L-lysine = [E2 ubiquitin-conjugating enzyme]-L-cysteine + N(6)-ubiquitinyl-[acceptor protein]-L-lysine.. Functionally, core component of the CTLH E3 ubiquitin-protein ligase complex that selectively accepts ubiquitin from UBE2H and mediates ubiquitination and subsequent proteasomal degradation of the transcription factor HBP1. MAEA and RMND5A are both required for catalytic activity of the CTLH E3 ubiquitin-protein ligase complex. MAEA is required for normal cell proliferation. The CTLH E3 ubiquitin-protein ligase complex is not required for the degradation of enzymes involved in gluconeogenesis, such as FBP1. Plays a role in erythroblast maturation and in the development of mature macrophages. Mediates the attachment of erythroid cell to mature macrophages; this MAEA-mediated contact inhibits erythroid cell apoptosis. Participates in erythroblastic island formation, which is the functional unit of definitive erythropoiesis. Associates with F-actin to regulate actin distribution in erythroblasts and macrophages. May contribute to nuclear architecture and cells division events. This chain is E3 ubiquitin-protein transferase MAEA (maea), found in Xenopus laevis (African clawed frog).